A 333-amino-acid chain; its full sequence is Glycerol-3-phosphate dehydrogenase [NAD(P)+] (333 aa).

NADPH contacts are provided by serine 10, tryptophan 11, and lysine 105. Residues lysine 105, glycine 136, and threonine 138 each contribute to the sn-glycerol 3-phosphate site. Alanine 140 is a binding site for NADPH. Residues lysine 191, aspartate 244, serine 254, arginine 255, and asparagine 256 each coordinate sn-glycerol 3-phosphate. Lysine 191 functions as the Proton acceptor in the catalytic mechanism. Residue arginine 255 participates in NADPH binding. NADPH contacts are provided by valine 279 and glutamate 281.

It belongs to the NAD-dependent glycerol-3-phosphate dehydrogenase family.

The protein localises to the cytoplasm. The enzyme catalyses sn-glycerol 3-phosphate + NAD(+) = dihydroxyacetone phosphate + NADH + H(+). The catalysed reaction is sn-glycerol 3-phosphate + NADP(+) = dihydroxyacetone phosphate + NADPH + H(+). It participates in membrane lipid metabolism; glycerophospholipid metabolism. Catalyzes the reduction of the glycolytic intermediate dihydroxyacetone phosphate (DHAP) to sn-glycerol 3-phosphate (G3P), the key precursor for phospholipid synthesis. The chain is Glycerol-3-phosphate dehydrogenase [NAD(P)+] from Syntrophotalea carbinolica (strain DSM 2380 / NBRC 103641 / GraBd1) (Pelobacter carbinolicus).